Reading from the N-terminus, the 716-residue chain is Amino-acid acetyltransferase, mitochondrial (716 aa).

The transit peptide at 1-44 directs the protein to the mitochondrion; that stretch reads MSPHTGWPRTVNSSLLKKHRSSLCTCQHTSSFLPRSFSTTADRH. Disordered stretches follow at residues 99–119 and 487–508; these read YPKS…APTL and LSSS…TVYP. The span at 102–112 shows a compositional bias: basic and acidic residues; it reads SPDENKPEPEK. The segment covering 497 to 508 has biased composition (polar residues); that stretch reads GPTNNGQGTVYP. Residues 537–706 form the N-acetyltransferase domain; that stretch reads SRPRLKLDDP…YEAVCRSTQP (170 aa).

Belongs to the acetyltransferase family.

It localises to the mitochondrion. The catalysed reaction is L-glutamate + acetyl-CoA = N-acetyl-L-glutamate + CoA + H(+). It functions in the pathway amino-acid biosynthesis; L-arginine biosynthesis; N(2)-acetyl-L-ornithine from L-glutamate: step 1/4. N-acetylglutamate synthase involved in arginine biosynthesis. The sequence is that of Amino-acid acetyltransferase, mitochondrial (arg2) from Neosartorya fischeri (strain ATCC 1020 / DSM 3700 / CBS 544.65 / FGSC A1164 / JCM 1740 / NRRL 181 / WB 181) (Aspergillus fischerianus).